Consider the following 1482-residue polypeptide: Pregnancy zone protein (1482 aa).

A signal peptide spans 1–25 (MRKDRLLHLCLVLLLILLSASDSNS). 5 N-linked (GlcNAc...) asparagine glycosylation sites follow: Asn-54, Asn-69, Asn-246, Asn-392, and Asn-406. The interval 685-735 (CSVIPSVSAGAVGQGYYGAGLGVVERPYVPQLGTYNVIPLNNEQSSGPVPE) is bait region. Residues Asn-753, Asn-875, and Asn-932 are each glycosylated (N-linked (GlcNAc...) asparagine). Residues 978-981 (CGEQ) constitute a cross-link (isoglutamyl cysteine thioester (Cys-Gln)). N-linked (GlcNAc...) asparagine glycans are attached at residues Asn-997 and Asn-1430.

It belongs to the protease inhibitor I39 (alpha-2-macroglobulin) family. Homotetramer, which consists of two pairs of disulfide-linked chains. In terms of tissue distribution, plasma. Prominent constituent of late-pregnancy sera.

The protein resides in the secreted. In terms of biological role, is able to inhibit all four classes of proteinases by a unique 'trapping' mechanism. This protein has a peptide stretch, called the 'bait region' which contains specific cleavage sites for different proteinases. When a proteinase cleaves the bait region, a conformational change is induced in the protein which traps the proteinase. The entrapped enzyme remains active against low molecular weight substrates (activity against high molecular weight substrates is greatly reduced). Following cleavage in the bait region a thioester bond is hydrolyzed and mediates the covalent binding of the protein to the proteinase. The polypeptide is Pregnancy zone protein (PZP) (Homo sapiens (Human)).